The sequence spans 101 residues: Large ribosomal subunit protein uL23 (101 aa).

It belongs to the universal ribosomal protein uL23 family. Part of the 50S ribosomal subunit. Contacts protein L29, and trigger factor when it is bound to the ribosome.

Functionally, one of the early assembly proteins it binds 23S rRNA. One of the proteins that surrounds the polypeptide exit tunnel on the outside of the ribosome. Forms the main docking site for trigger factor binding to the ribosome. This chain is Large ribosomal subunit protein uL23, found in Lactobacillus helveticus (strain DPC 4571).